We begin with the raw amino-acid sequence, 153 residues long: UPF0260 protein YcgN (153 aa).

This sequence belongs to the UPF0260 family.

The polypeptide is UPF0260 protein YcgN (Salmonella paratyphi B (strain ATCC BAA-1250 / SPB7)).